Consider the following 172-residue polypeptide: Ribosome maturation factor RimP (172 aa).

Belongs to the RimP family.

It localises to the cytoplasm. In terms of biological role, required for maturation of 30S ribosomal subunits. This Nitratidesulfovibrio vulgaris (strain ATCC 29579 / DSM 644 / CCUG 34227 / NCIMB 8303 / VKM B-1760 / Hildenborough) (Desulfovibrio vulgaris) protein is Ribosome maturation factor RimP.